Here is a 196-residue protein sequence, read N- to C-terminus: Phosphoheptose isomerase (196 aa).

The SIS domain maps to 36–196; that stretch reads MVACLMNEGK…AVDYMLLGGD (161 aa). 51-53 lines the substrate pocket; the sequence is NGG. Positions 60 and 64 each coordinate Zn(2+). Residues E64, 93 to 94, 119 to 121, S124, and Q174 each bind substrate; these read ND and STS. Residues Q174 and H182 each contribute to the Zn(2+) site.

The protein belongs to the SIS family. GmhA subfamily. As to quaternary structure, homotetramer. Zn(2+) serves as cofactor.

The protein resides in the cytoplasm. The enzyme catalyses 2 D-sedoheptulose 7-phosphate = D-glycero-alpha-D-manno-heptose 7-phosphate + D-glycero-beta-D-manno-heptose 7-phosphate. The protein operates within carbohydrate biosynthesis; D-glycero-D-manno-heptose 7-phosphate biosynthesis; D-glycero-alpha-D-manno-heptose 7-phosphate and D-glycero-beta-D-manno-heptose 7-phosphate from sedoheptulose 7-phosphate: step 1/1. In terms of biological role, catalyzes the isomerization of sedoheptulose 7-phosphate in D-glycero-D-manno-heptose 7-phosphate. In Laribacter hongkongensis (strain HLHK9), this protein is Phosphoheptose isomerase.